A 201-amino-acid polypeptide reads, in one-letter code: Small ribosomal subunit protein uS4 (201 aa).

The S4 RNA-binding domain occupies 91 to 157; it reads SRLDNVIYRA…VPFQIARETA (67 aa).

Belongs to the universal ribosomal protein uS4 family. As to quaternary structure, part of the 30S ribosomal subunit. Contacts protein S5. The interaction surface between S4 and S5 is involved in control of translational fidelity.

Functionally, one of the primary rRNA binding proteins, it binds directly to 16S rRNA where it nucleates assembly of the body of the 30S subunit. Its function is as follows. With S5 and S12 plays an important role in translational accuracy. The sequence is that of Small ribosomal subunit protein uS4 from Mycobacterium tuberculosis (strain ATCC 25177 / H37Ra).